A 463-amino-acid polypeptide reads, in one-letter code: Phosphomethylpyrimidine synthase (463 aa).

Residues Asn-80, Met-109, Tyr-138, His-173, 193–195 (SRG), 234–237 (DGLR), and Glu-273 each bind substrate. His-277 is a Zn(2+) binding site. Position 300 (Tyr-300) interacts with substrate. Zn(2+) is bound at residue His-341. Residues Cys-421, Cys-424, and Cys-429 each coordinate [4Fe-4S] cluster.

Belongs to the ThiC family. In terms of assembly, homodimer. The cofactor is [4Fe-4S] cluster.

It catalyses the reaction 5-amino-1-(5-phospho-beta-D-ribosyl)imidazole + S-adenosyl-L-methionine = 4-amino-2-methyl-5-(phosphooxymethyl)pyrimidine + CO + 5'-deoxyadenosine + formate + L-methionine + 3 H(+). It functions in the pathway cofactor biosynthesis; thiamine diphosphate biosynthesis. In terms of biological role, catalyzes the synthesis of the hydroxymethylpyrimidine phosphate (HMP-P) moiety of thiamine from aminoimidazole ribotide (AIR) in a radical S-adenosyl-L-methionine (SAM)-dependent reaction. In Anaeromyxobacter sp. (strain K), this protein is Phosphomethylpyrimidine synthase.